The following is a 163-amino-acid chain: MLLAIKEFFNSLLLKELFKGLALTGRYLFARKITVLFPEEKTPLSPRFRGLHALRRYPNGEERCIACKLCEAVCPALAITIESDQRDDGTRRTTRYDIDLTKCIFCGFCEEACPVDAIVETHILEYHGEKRGDLYFTKDMLLAVGDRFEPEIAANKAADAKYR.

2 4Fe-4S ferredoxin-type domains span residues 54–84 and 94–123; these read LRRY…IESD and TRYD…ETHI. C64, C67, C70, C74, C103, C106, C109, and C113 together coordinate [4Fe-4S] cluster.

It belongs to the complex I 23 kDa subunit family. As to quaternary structure, NDH-1 is composed of 14 different subunits. Subunits NuoA, H, J, K, L, M, N constitute the membrane sector of the complex. [4Fe-4S] cluster is required as a cofactor.

Its subcellular location is the cell inner membrane. The catalysed reaction is a quinone + NADH + 5 H(+)(in) = a quinol + NAD(+) + 4 H(+)(out). Functionally, NDH-1 shuttles electrons from NADH, via FMN and iron-sulfur (Fe-S) centers, to quinones in the respiratory chain. The immediate electron acceptor for the enzyme in this species is believed to be ubiquinone. Couples the redox reaction to proton translocation (for every two electrons transferred, four hydrogen ions are translocated across the cytoplasmic membrane), and thus conserves the redox energy in a proton gradient. The polypeptide is NADH-quinone oxidoreductase subunit I (Ralstonia nicotianae (strain ATCC BAA-1114 / GMI1000) (Ralstonia solanacearum)).